Here is a 682-residue protein sequence, read N- to C-terminus: Tail-specific protease (682 aa).

A signal peptide spans 1–22; the sequence is MNMFFRLTALAGLLAIAGQTFA. The PDZ domain maps to 238 to 322; it reads NTEMSLSLEG…SKVRLEILPA (85 aa). Residues Ser-452, Asp-463, and Lys-477 each act as charge relay system in the active site. The segment covering 635–650 has biased composition (basic and acidic residues); it reads GKPELKKLDDLPKDYQ. The segment at 635-654 is disordered; sequence GKPELKKLDDLPKDYQEPDP.

It belongs to the peptidase S41A family.

The protein localises to the cell inner membrane. It carries out the reaction The enzyme shows specific recognition of a C-terminal tripeptide, Xaa-Yaa-Zaa, in which Xaa is preferably Ala or Leu, Yaa is preferably Ala or Tyr, and Zaa is preferably Ala, but then cleaves at a variable distance from the C-terminus. A typical cleavage is -Ala-Ala-|-Arg-Ala-Ala-Lys-Glu-Asn-Tyr-Ala-Leu-Ala-Ala.. Its function is as follows. Involved in the cleavage of a C-terminal peptide of 11 residues from the precursor form of penicillin-binding protein 3 (PBP3). May be involved in protection of the bacterium from thermal and osmotic stresses. This is Tail-specific protease (prc) from Escherichia coli (strain K12).